Reading from the N-terminus, the 432-residue chain is Trigger factor (432 aa).

In terms of domain architecture, PPIase FKBP-type spans 161–246 (EDRVTIDFTG…LKKVEERELP (86 aa)).

This sequence belongs to the FKBP-type PPIase family. Tig subfamily. Homodimer and monomer. In vivo most of the ribosomes are in complex with monomeric TF. Uncomplexed TF, however, is in a monomer-dimer equilibrium with approximately two thirds of TF existing in a dimeric state.

Its subcellular location is the cytoplasm. The enzyme catalyses [protein]-peptidylproline (omega=180) = [protein]-peptidylproline (omega=0). Functionally, involved in protein export. Acts as a chaperone by maintaining the newly synthesized protein in an open conformation. Functions as a peptidyl-prolyl cis-trans isomerase. This is Trigger factor from Escherichia coli O127:H6 (strain E2348/69 / EPEC).